We begin with the raw amino-acid sequence, 498 residues long: UDP-N-acetylmuramate--L-alanine ligase (498 aa).

An ATP-binding site is contributed by 122–128; that stretch reads GTHGKTS.

It belongs to the MurCDEF family.

Its subcellular location is the cytoplasm. It catalyses the reaction UDP-N-acetyl-alpha-D-muramate + L-alanine + ATP = UDP-N-acetyl-alpha-D-muramoyl-L-alanine + ADP + phosphate + H(+). It functions in the pathway cell wall biogenesis; peptidoglycan biosynthesis. Its function is as follows. Cell wall formation. This chain is UDP-N-acetylmuramate--L-alanine ligase, found in Corynebacterium jeikeium (strain K411).